A 420-amino-acid chain; its full sequence is Amino acid decarboxylase lolD1 (420 aa).

Residue Lys-62 is modified to N6-(pyridoxal phosphate)lysine. Residues Ser-194, Gly-231, and 266 to 269 each bind pyridoxal 5'-phosphate; that span reads EPGT. A substrate-binding site is contributed by 315 to 316; that stretch reads IV. Cys-351 (proton donor; shared with dimeric partner) is an active-site residue. Cys-351 carries the S-nitrosocysteine modification. Residue Asp-352 participates in substrate binding. Tyr-381 is a pyridoxal 5'-phosphate binding site.

It belongs to the Orn/Lys/Arg decarboxylase class-II family. In terms of assembly, homodimer. Pyridoxal 5'-phosphate serves as cofactor.

It participates in alkaloid biosynthesis. Functionally, amino acid decarboxylase; part of the gene cluster that mediates the biosynthesis of loline alkaloids, potent insecticidal agents composed of a pyrrolizidine ring system and an uncommon ether bridge linking carbons 2 and 7. Lolines are structurally differentiated by the various modifications of the L-amino group and include norloline, loline, N-methylloline, N-acetylloline, N-acetylnorloline, and N-formylloline. The first committed step is the condensation of O-acetyl-L-homoserine (derived from L-aspartic acid) and L-proline, probably catalyzed by the gamma-type pyridoxal 5'-phosphate(PLP)-dependent enzyme lolC, to give the diamino diacid, NACPP. Ensuing cyclization, decarboxylation, and acetylation steps yield 1-exo-acetamidopyrrolizidine (AcAP). LolO is required for installation of the ether bridge upon the pathway intermediate, 1-exo-acetamidopyrrolizidine (AcAP). In sequential 2-oxoglutarate- and O(2)-consuming steps, lolO removes hydrogens from C2 and C7 of AcAP to form both carbon-oxygen bonds in N-acetylnorloline (NANL), the precursor to all other lolines. The enzymes lolD, lolE, lolF and lolT have also been proposed to be involved in the ether-bridge installation. Further processing of the exocyclic moiety of NANL by fungal N-acetamidase (LolN), methyltransferase (LolM), and cytochrome P450 (LolP) enzymes, with occasional involvement of a plant acetyltransferase, generates the other known lolines. LolN transforms NANL to norlonine which is monomethylated and dimethylated to respectively lonine and N-methyllonine (NML) by lolM. LolP catalyzes hydroxylation of the methyl group in N-methylloline (NML) and further oxygenation to N-formylloline (NFL). A plant acetyltransferase is responsible for the acetylation of loline to form N-acetylloline (NAL). LolA might interact with aspartate kinase to prevent feedback inhibition of its activity by these end products and thereby promote production of L-homoserine from L-aspartate. This chain is Amino acid decarboxylase lolD1, found in Epichloe uncinata (Endophyte fungus).